A 535-amino-acid chain; its full sequence is MASLSLAPVNIFKAGADEERAETARLSSFIGAIAIGDLVKSTLGPKGMDKILLSSGRDASLMVTNDGATILKNIGVDNPAAKVLVDMSRVQDDEVGDGTTSVTVLAAELLREAESLIAKKIHPQTIIAGWREATKAARQALLNSAVDHGSDEVKFRQDLMNIAGTTLSSKLLTHHKDHFTKLAVEAVLRLKGSGNLEAIHVIKKLGGSLADSYLDEGFLLDKKIGVNQPKRIENAKILIANTGMDTDKIKIFGSRVRVDSTAKVAEIEHAEKEKMKEKVERILKHGINCFINRQLIYNYPEQLFGAAGVMAIEHADFVGVERLALVTGGEIASTFDHPELVKLGSCKLIEEVMIGEDKLIHFSGVALGEACTIVLRGATQQILDEAERSLHDALCVLAQTVKDSRTVYGGGCSEMLMAHAVTQLASRTPGKEAVAMESYAKALRMLPTIIADNAGYDSADLVAQLRAAHSEGKTTAGLDMKEGTIGDMSVLGITESFQVKRQVLLSAAEAAEVILRVDNIIKAAPRKRVPDHHPC.

Alanine 2 is subject to N-acetylalanine. Serine 3 is subject to Phosphoserine. Lysine 13 carries the N6-acetyllysine modification. Glycine 44 contributes to the ADP binding site. Glycine 44 provides a ligand contact to ATP. The residue at position 60 (serine 60) is a Phosphoserine. Position 97 (aspartate 97) interacts with Mg(2+). ADP is bound by residues glycine 98, threonine 99, threonine 100, and serine 101. Residues glycine 98, threonine 99, and threonine 100 each contribute to the ATP site. At lysine 154 the chain carries N6-acetyllysine. 2 residues coordinate ADP: serine 168 and serine 169. Lysine 181 is subject to N6-acetyllysine. Lysine 248 is covalently cross-linked (Glycyl lysine isopeptide (Lys-Gly) (interchain with G-Cter in SUMO2)). A Phosphoserine modification is found at serine 260. Threonine 261 carries the phosphothreonine modification. Positions 410, 495, and 500 each coordinate ADP. Glutamate 495 and lysine 500 together coordinate ATP.

The protein belongs to the TCP-1 chaperonin family. In terms of assembly, component of the chaperonin-containing T-complex (TRiC), a hexadecamer composed of two identical back-to-back stacked rings enclosing a protein folding chamber. Each ring is made up of eight different subunits: TCP1/CCT1, CCT2, CCT3, CCT4, CCT5, CCT6A/CCT6, CCT7, CCT8. Interacts with PACRG. Interacts with FLCN. Interacts with DLEC1. Interacts with SVEP1.

The protein localises to the cytoplasm. The enzyme catalyses ATP + H2O = ADP + phosphate + H(+). Component of the chaperonin-containing T-complex (TRiC), a molecular chaperone complex that assists the folding of actin, tubulin and other proteins upon ATP hydrolysis. The TRiC complex mediates the folding of WRAP53/TCAB1, thereby regulating telomere maintenance. As part of the TRiC complex may play a role in the assembly of BBSome, a complex involved in ciliogenesis regulating transports vesicles to the cilia. The sequence is that of T-complex protein 1 subunit beta (CCT2) from Bos taurus (Bovine).